Consider the following 95-residue polypeptide: Putative defensin-like protein 252 (95 aa).

The first 27 residues, 1 to 27 (MRCVTSFVVLCILMFLVVNNVKVDVKA), serve as a signal peptide directing secretion. 4 cysteine pairs are disulfide-bonded: C34–C93, C45–C72, C56–C85, and C70–C87.

Belongs to the DEFL family.

It localises to the secreted. The chain is Putative defensin-like protein 252 (SCRL13) from Arabidopsis thaliana (Mouse-ear cress).